Here is a 78-residue protein sequence, read N- to C-terminus: Large ribosomal subunit protein bL28 (78 aa).

The protein belongs to the bacterial ribosomal protein bL28 family.

The protein is Large ribosomal subunit protein bL28 of Hamiltonella defensa subsp. Acyrthosiphon pisum (strain 5AT).